Reading from the N-terminus, the 211-residue chain is Mitotic spindle assembly checkpoint protein MAD2B (211 aa).

The HORMA domain maps to 13 to 203; that stretch reads QVVADVLCEF…SDILKMQLYV (191 aa). Positions 21 to 155 are mediates interaction with REV1 and REV3L and homodimerization; the sequence is EFLEVAVHLI…FTVLVHTREA (135 aa). The interval 150–211 is mediates interaction with ipaB; sequence VHTREAATRN…YVEERAHKGS (62 aa).

Homooligomer. Heterodimer with REV3L. This dimer forms the minimal DNA polymerase zeta complex (Pol-zeta2), with REV3L bearing DNA polymerase catalytic activity, although its activity is very low in this context. Component of the tetrameric Pol-zeta complex (Pol-zeta4), which consists of REV3L, MAD2L2, POLD2 and POLD3; Pol-zeta4 is the fully active form of DNA polymerase zeta. Component of the shieldin complex, consisting of SHLD1, SHLD2, SHLD3 and MAD2L2/REV7. Within the complex, SHLD2 forms a scaffold which interacts with a SHLD3-MAD2L2 subcomplex via its N-terminus, and with SHLD1 via its C-terminus. Interacts with REV1. Interacts with ADAM9. Interacts with CHAMP1. Interacts with FZR1 (in complex with the anaphase promoting complex APC). Interacts with CDC20; PubMed:11459825 could not detect the interaction. Interacts with RAN. Interacts with ELK1; the interaction is direct and recruits MAD2L2 to ELK1-specific promoters. May interact with the JNK kinases MAPK8 and/or MAPK9 to stimulate ELK1 phosphorylation and transcriptional activity upon DNA damage. Interacts with TCF7L2; prevents its binding to promoters and negatively modulates its transcriptional activity. Interacts with YY1AP1. Interacts with S.flexneri protein ipaB; prevents the interaction of MAD2L2 with FZR1 and CDC20 resulting in an activation of the anaphase-promoting complex APC and a cell cycle arrest. Interacts with PRCC; the interaction is direct. Interacts with POGZ. Interacts with ASTE1. As to expression, ubiquitously expressed.

The protein localises to the nucleus. Its subcellular location is the cytoplasm. The protein resides in the cytoskeleton. It is found in the spindle. It localises to the chromosome. Its function is as follows. Adapter protein able to interact with different proteins and involved in different biological processes. Mediates the interaction between the error-prone DNA polymerase zeta catalytic subunit REV3L and the inserter polymerase REV1, thereby mediating the second polymerase switching in translesion DNA synthesis. Translesion DNA synthesis releases the replication blockade of replicative polymerases, stalled in presence of DNA lesions. Component of the shieldin complex, which plays an important role in repair of DNA double-stranded breaks (DSBs). During G1 and S phase of the cell cycle, the complex functions downstream of TP53BP1 to promote non-homologous end joining (NHEJ) and suppress DNA end resection. Mediates various NHEJ-dependent processes including immunoglobulin class-switch recombination, and fusion of unprotected telomeres. May also regulate another aspect of cellular response to DNA damage through regulation of the JNK-mediated phosphorylation and activation of the transcriptional activator ELK1. Inhibits the FZR1- and probably CDC20-mediated activation of the anaphase promoting complex APC thereby regulating progression through the cell cycle. Regulates TCF7L2-mediated gene transcription and may play a role in epithelial-mesenchymal transdifferentiation. The protein is Mitotic spindle assembly checkpoint protein MAD2B (MAD2L2) of Homo sapiens (Human).